We begin with the raw amino-acid sequence, 133 residues long: Peptidyl-prolyl cis-trans isomerase PIN4 (133 aa).

Over residues 1–29 (MGKNDKKGADKGGKAKGGDKGKDAKDTKD) the composition is skewed to basic and acidic residues. The tract at residues 1-42 (MGKNDKKGADKGGKAKGGDKGKDAKDTKDSGSGGKAKGAQSI) is disordered. Residues 39-131 (AQSINVRHIL…FGYHIIMVEG (93 aa)) enclose the PpiC domain.

It belongs to the PpiC/parvulin rotamase family. PIN4 subfamily.

The enzyme catalyses [protein]-peptidylproline (omega=180) = [protein]-peptidylproline (omega=0). Functionally, PPIases accelerate the folding of proteins. It catalyzes the cis-trans isomerization of proline imidic peptide bonds in oligopeptides. In Gibberella zeae (strain ATCC MYA-4620 / CBS 123657 / FGSC 9075 / NRRL 31084 / PH-1) (Wheat head blight fungus), this protein is Peptidyl-prolyl cis-trans isomerase PIN4 (PIN4).